Consider the following 331-residue polypeptide: Protein C10 (331 aa).

The protein belongs to the poxviridae C4/C10 protein family.

This is Protein C10 from Vaccinia virus (strain Western Reserve) (VACV).